Here is a 333-residue protein sequence, read N- to C-terminus: Glycerol-3-phosphate dehydrogenase [NAD(P)+] (333 aa).

Positions 10, 11, 31, and 105 each coordinate NADPH. Sn-glycerol 3-phosphate contacts are provided by K105, G136, and S138. Position 140 (A140) interacts with NADPH. Sn-glycerol 3-phosphate is bound by residues K191, D244, S254, R255, and N256. K191 functions as the Proton acceptor in the catalytic mechanism. R255 is an NADPH binding site. NADPH-binding residues include V279 and E281.

It belongs to the NAD-dependent glycerol-3-phosphate dehydrogenase family.

The protein localises to the cytoplasm. It carries out the reaction sn-glycerol 3-phosphate + NAD(+) = dihydroxyacetone phosphate + NADH + H(+). It catalyses the reaction sn-glycerol 3-phosphate + NADP(+) = dihydroxyacetone phosphate + NADPH + H(+). It participates in membrane lipid metabolism; glycerophospholipid metabolism. In terms of biological role, catalyzes the reduction of the glycolytic intermediate dihydroxyacetone phosphate (DHAP) to sn-glycerol 3-phosphate (G3P), the key precursor for phospholipid synthesis. The sequence is that of Glycerol-3-phosphate dehydrogenase [NAD(P)+] from Leptospira biflexa serovar Patoc (strain Patoc 1 / Ames).